The sequence spans 450 residues: Glucose-6-phosphate isomerase (450 aa).

Glu291 acts as the Proton donor in catalysis. Residues His312 and Lys426 contribute to the active site.

The protein belongs to the GPI family.

The protein localises to the cytoplasm. It carries out the reaction alpha-D-glucose 6-phosphate = beta-D-fructose 6-phosphate. It participates in carbohydrate biosynthesis; gluconeogenesis. It functions in the pathway carbohydrate degradation; glycolysis; D-glyceraldehyde 3-phosphate and glycerone phosphate from D-glucose: step 2/4. Its function is as follows. Catalyzes the reversible isomerization of glucose-6-phosphate to fructose-6-phosphate. The sequence is that of Glucose-6-phosphate isomerase from Clostridium botulinum (strain Hall / ATCC 3502 / NCTC 13319 / Type A).